We begin with the raw amino-acid sequence, 104 residues long: Large ribosomal subunit protein uL24 (104 aa).

Belongs to the universal ribosomal protein uL24 family. Part of the 50S ribosomal subunit.

Its function is as follows. One of two assembly initiator proteins, it binds directly to the 5'-end of the 23S rRNA, where it nucleates assembly of the 50S subunit. One of the proteins that surrounds the polypeptide exit tunnel on the outside of the subunit. The polypeptide is Large ribosomal subunit protein uL24 (Pseudoalteromonas translucida (strain TAC 125)).